Here is a 361-residue protein sequence, read N- to C-terminus: Histidinol-phosphate aminotransferase (361 aa).

The residue at position 224 (K224) is an N6-(pyridoxal phosphate)lysine.

The protein belongs to the class-II pyridoxal-phosphate-dependent aminotransferase family. Histidinol-phosphate aminotransferase subfamily. Homodimer. It depends on pyridoxal 5'-phosphate as a cofactor.

It carries out the reaction L-histidinol phosphate + 2-oxoglutarate = 3-(imidazol-4-yl)-2-oxopropyl phosphate + L-glutamate. Its pathway is amino-acid biosynthesis; L-histidine biosynthesis; L-histidine from 5-phospho-alpha-D-ribose 1-diphosphate: step 7/9. The chain is Histidinol-phosphate aminotransferase from Limosilactobacillus fermentum (strain NBRC 3956 / LMG 18251) (Lactobacillus fermentum).